The chain runs to 51 residues: uncharacterized protein (51 aa).

This is an uncharacterized protein from Pseudoalteromonas espejiana (Bacteriophage PM2).